The chain runs to 181 residues: Adenine phosphoribosyltransferase (181 aa).

This sequence belongs to the purine/pyrimidine phosphoribosyltransferase family. As to quaternary structure, homodimer.

The protein localises to the cytoplasm. It catalyses the reaction AMP + diphosphate = 5-phospho-alpha-D-ribose 1-diphosphate + adenine. Its pathway is purine metabolism; AMP biosynthesis via salvage pathway; AMP from adenine: step 1/1. Catalyzes a salvage reaction resulting in the formation of AMP, that is energically less costly than de novo synthesis. The chain is Adenine phosphoribosyltransferase (Aprt) from Drosophila pseudoobscura pseudoobscura (Fruit fly).